The sequence spans 2611 residues: Highly reducing polyketide synthase ATEG_07659 (2611 aa).

The Ketosynthase family 3 (KS3) domain maps to 10–409 (SEPIAIIGLS…GTNSHVIVEG (400 aa)). Catalysis depends on for beta-ketoacyl synthase activity residues C157, H292, and H330. Residues 537–844 (MVFTGQGAQW…VRFVEAFTDM (308 aa)) are malonyl-CoA:ACP transacylase (MAT) domain. Residues 969 to 1109 (HDLLGVLVPG…GLITVQMAAD (141 aa)) are N-terminal hotdog fold. The 324-residue stretch at 969–1292 (HDLLGVLVPG…CQSLGRSAPG (324 aa)) folds into the PKS/mFAS DH domain. The dehydratase (DH) domain stretch occupies residues 970-1289 (DLLGVLVPGT…GLVCQSLGRS (320 aa)). The Proton acceptor; for dehydratase activity role is filled by H1001. Positions 1128 to 1292 (GYTRRIDPQD…CQSLGRSAPG (165 aa)) are C-terminal hotdog fold. D1199 acts as the Proton donor; for dehydratase activity in catalysis. Residues 1469 to 1602 (FGQLKSLLAA…GATLLLMETT (134 aa)) are methyltransferase (CMet) domain. The segment at 1898 to 2213 (GLLDTLAFGD…TGKHLGKLVL (316 aa)) is enoyl reductase (ER) domain. The ketoreductase (KR) domain stretch occupies residues 2236–2416 (ASYLLVGGVG…AVSLDMGVIK (181 aa)). The span at 2499–2509 (SRAQAQQAGGD) shows a compositional bias: low complexity. Positions 2499–2520 (SRAQAQQAGGDSDSEPLSAKLR) are disordered. Positions 2527-2604 (AAARCVGDAI…ALALDVVAKS (78 aa)) constitute a Carrier domain. The residue at position 2564 (S2564) is an O-(pantetheine 4'-phosphoryl)serine.

The protein operates within secondary metabolite biosynthesis. Functionally, highly reducing polyketide synthase; part of the cluster B that mediates the biosynthesis of azasperpyranones, members of the azaphilone family that exhibit anti-cancer activities. Azasperpyranones are synthesized by 2 clusters, A and B. Cluster A is responsible for the production of the polyhydric phenol moiety while the azaphilonoid scaffold is produced by the cluster B. The non-reducing polyketide synthase ATEG_03629 produces 5-methyl orsellinic acid, which is then reduced to 5-methyl orsellinic aldehyde by the NRPS-like protein ATEG_03630. 5-methyl orsellinic aldehyde is then first hydroxylated by the FAD-dependent monooxygenase ATEG_03635 and subsequently hydroxylated by the cytochrome P450 monooxygenase ATEG_03631 to produce the unstable polyhydric phenol precursor of azasperpyranones. On the other hand, the polyketide synthase ATEG_07659 is responsible for producing the 3,5-dimethyloctadienone moiety from acetyl-CoA, three malonyl-CoA, and two S-adenosyl methionines (SAM). The 3,5-dimethyloctadienone moiety is then loaded onto the SAT domain of ATEG_07661 and extended with four malonyl-CoA and one SAM, which leads to the formation of 2,4-dihydroxy-6-(5,7-dimethyl-2-oxo-trans-3-trans-5-nonadienyl)-3-methylbenzaldehyde (compound 8) after reductive release and aldol condensation. The FAD-dependent monooxygenase ATEG_07662 is the next enzyme in the biosynthesis sequence and hydroxylates the side chain at the benzylic position of compound 8. In Aspergillus nidulans, afoF, the ortholog of the FAD-dependent oxygenase ATEG_07660, is the key enzyme for the biosynthesis of asperfuranone by catalyzing the hydroxylation at C-8 of to prevent the formation of a six-membered ring hemiacetal intermediate and thus facilitating the formation of a five-membered ring to produce asperfuranone. In Aspergillus terreus, ATEG_07660 is probably not functional, which leads to the formation of the six-membered ring hemiacetal intermediate presperpyranone instead of asperfuranone. Finally, ATEG_03636 is involved in the condensation of the polyhydric phenol moiety produced by cluster A and the perasperpyranone precursor produced by cluster B, to yield azasperpyranone A. Further modifications of azasperpyranone A result in the production of derivatives, including azasperpyranone B to F. This is Highly reducing polyketide synthase ATEG_07659 from Aspergillus terreus (strain NIH 2624 / FGSC A1156).